The primary structure comprises 725 residues: MSSEAKCPFPHAANRSRSNQDWWPNQLRVDVLNQHSNKSNPLGEKFNYAEEFKKLDYKALKADLVKLMTDSQDWWPADFGHYGPQFVRMAWHATGTYRTMDGRGGGGRGQQRFAPLNSWPDNVNIDKSRRLLWPIKQKYGQRISWADLLVLTGNVALESMGFRTFGFAGGRADVWEPDTDVNWGAETTWLGTDKRFSGDRELDENLSATHMGLIYVNPEGPDGSGDYMAAAKDIRATFYRMAMDDEEIVALIAGGHTFGKAHGAAPESHKGAEPEGAPIEAQGLGWVSNFGDGYGKDTVSSGLEVTWTKTPALWSNNFFENLFKYEWEITKSPAGAKQWVAKDAEDIIPDAHIKGKFHKPTMLTTDLTLRFDPEFGKISKRFYEDPQAFAEAFARAWFKLTHRDMGPRSRYLGPEVPKEELIWQDPIPEVDYKLVDAADVTALKAKLLTSGLSVSELVGTAWASASTFRGSDKRGGANGARIRLAPMKDWEVNQPEQLAKVLKTLEGIQADFNQSASGGKQVSLADLIVLAGSVGVEQAAKAAGVNVSVPFAAGRNDARQDQTDVESFAALEPRTDGFRNYVGKKNGVPAEVALIDKAQLLCLSVPELTVLISGLRAININVGGVKHGVLTRTPGVLNNEVLLNLLDMGTQWKPVESDANVFEGRDRKSGEVKWTATRADLVFGSNSILRSVAEVYAESDAKEKFVKDFVAAWVKVMNADRFDLA.

A disordered region spans residues 1–20 (MSSEAKCPFPHAANRSRSNQ). A cross-link (tryptophyl-tyrosyl-methioninium (Trp-Tyr) (with M-241)) is located at residues 91–215 (WHATGTYRTM…LSATHMGLIY (125 aa)). His-92 serves as the catalytic Proton acceptor. Residues 215–241 (YVNPEGPDGSGDYMAAAKDIRATFYRM) constitute a cross-link (tryptophyl-tyrosyl-methioninium (Tyr-Met) (with W-91)). His-256 contacts heme b.

Belongs to the peroxidase family. Peroxidase/catalase subfamily. As to quaternary structure, homodimer or homotetramer. Heme b serves as cofactor. Post-translationally, formation of the three residue Trp-Tyr-Met cross-link is important for the catalase, but not the peroxidase activity of the enzyme.

It carries out the reaction H2O2 + AH2 = A + 2 H2O. It catalyses the reaction 2 H2O2 = O2 + 2 H2O. Bifunctional enzyme with both catalase and broad-spectrum peroxidase activity. This Janthinobacterium sp. (strain Marseille) (Minibacterium massiliensis) protein is Catalase-peroxidase.